We begin with the raw amino-acid sequence, 510 residues long: 2,3-bisphosphoglycerate-independent phosphoglycerate mutase (510 aa).

Mn(2+)-binding residues include Asp12 and Ser62. The active-site Phosphoserine intermediate is the Ser62. Substrate is bound by residues His123, 153–154 (RD), Arg185, Arg191, 260–263 (RPDR), and Lys335. 5 residues coordinate Mn(2+): Asp402, His406, Asp443, His444, and His461.

Belongs to the BPG-independent phosphoglycerate mutase family. In terms of assembly, monomer. Mn(2+) is required as a cofactor.

The enzyme catalyses (2R)-2-phosphoglycerate = (2R)-3-phosphoglycerate. It functions in the pathway carbohydrate degradation; glycolysis; pyruvate from D-glyceraldehyde 3-phosphate: step 3/5. Its function is as follows. Catalyzes the interconversion of 2-phosphoglycerate and 3-phosphoglycerate. In Listeria monocytogenes serotype 4b (strain F2365), this protein is 2,3-bisphosphoglycerate-independent phosphoglycerate mutase.